Here is a 346-residue protein sequence, read N- to C-terminus: C5a anaphylatoxin chemotactic receptor 1 (346 aa).

The Extracellular segment spans residues 1-33 (MDDNNSDWTSYDFGNDTIPSPNEISLSHIGTRH). Asparagine 4 and asparagine 15 each carry an N-linked (GlcNAc...) asparagine glycan. Residues 34 to 60 (WITLVCYGIVFLLGVPGNALVVWVTGF) traverse the membrane as a helical segment. Residues 61-65 (RMPNS) lie on the Cytoplasmic side of the membrane. Residues 66-89 (VNAQWFLNLAIADLLCCLSLPILM) traverse the membrane as a helical segment. The Extracellular portion of the chain corresponds to 90 to 106 (VPLAQDQHWPFGALACK). A disulfide bridge connects residues cysteine 105 and cysteine 183. Residues 107–128 (LFSGIFYMMMYCSVLLLVVISL) traverse the membrane as a helical segment. The Cytoplasmic portion of the chain corresponds to 129-149 (DRFLLVTKPVWCQNNRQPRQA). Residues 150-170 (RILCFIIWILGLLGSSPYFAH) traverse the membrane as a helical segment. Topologically, residues 171–194 (MEIQHHSETKTVCTGSYSSLGHAW) are extracellular. Residues 195–220 (AITIIRSFLFFLLPFLIICISHWKVY) traverse the membrane as a helical segment. The Cytoplasmic portion of the chain corresponds to 221-238 (HMTSSGRRQRDKSSRTLR). A helical membrane pass occupies residues 239–261 (VILALVLGFFLCWTPLHIVDLLI). The Extracellular segment spans residues 262 to 279 (LVSDQPSERFEVNLNLAH). The chain crosses the membrane as a helical span at residues 280-300 (VLTLCLAYINSCLNPLLYVCL). Residues 301–346 (GRGFKENLISSLRSVLHFASEAPTHGPSMTTNSKSTTDGVFREKPV) lie on the Cytoplasmic side of the membrane. A disordered region spans residues 323 to 346 (PTHGPSMTTNSKSTTDGVFREKPV). Residues 327-338 (PSMTTNSKSTTD) are compositionally biased toward polar residues.

Belongs to the G-protein coupled receptor 1 family.

The protein localises to the cell membrane. In terms of biological role, receptor for the chemotactic and inflammatory peptide anaphylatoxin C5a. This receptor stimulates chemotaxis, granule enzyme release and superoxide anion production. In Danio rerio (Zebrafish), this protein is C5a anaphylatoxin chemotactic receptor 1 (c5ar1).